The chain runs to 139 residues: MAGARGCVVLLAAALMLVGAVLGSEDRSRLLGAPVPVDENDEGLQRALQFAMAEYNRASNDKYSSRVVRVISAKRQLVSGIKYILQVEIGRTTCPKSSGDLQSCEFHDEPEMAKYTTCTFVVYSIPWLNQIKLLESKCQ.

An N-terminal signal peptide occupies residues 1 to 23 (MAGARGCVVLLAAALMLVGAVLG). The Secondary area of contact motif lies at 76 to 80 (QLVSG). 2 disulfides stabilise this stretch: cysteine 94–cysteine 104 and cysteine 118–cysteine 138. Phosphoserine is present on serine 103.

Belongs to the cystatin family.

The protein resides in the secreted. Functionally, this protein binds tightly to and inhibits a variety of thiol proteases including ficin, papain, and cathepsins B, C, H, and L. Although isolated from egg white, it is also present in serum. The sequence is that of Cystatin from Gallus gallus (Chicken).